Reading from the N-terminus, the 307-residue chain is Dioxygenase swnH1 (307 aa).

Residues histidine 149, aspartate 151, and histidine 227 each contribute to the Fe cation site.

Belongs to the PhyH family. Homodimer. Fe cation serves as cofactor.

The protein operates within mycotoxin biosynthesis. Dioxygenase; part of the gene cluster that mediates the biosynthesis of swainsonine (SW), a cytotoxic fungal alkaloid and a potential cancer therapy drug. Swainsonine production occurs via a multibranched pathway and is dispensable for fungal colonization of plants and infection of insect hosts. The first step of swainsonine biosynthesis is the production of the precursor pipecolic acid (PA) via conversion of L-lysine (Lys) to 1-piperideine-6-carboxylate (P6C) by the aminotransferase swnA, the latter being further reduced to PA by the reductase swnR. PA can be converted from lysine by both the SW biosynthetic cluster and the unclustered genes such as lysine cyclodeaminase. The PKS-NRPS hybrid synthetase swnK uptakes and condensates PA and malonyl-CoA with and without skipping of the ketoreductase (KR) domain in order to produce 3 intermediates, 1-oxoindolizidine, (1S)-1-hydroxyindolizin, and (1R)-1-hydroxyindolizine; with the transisomer (1S)-1-hydroxyindolizin being predominant. The terminal thioester reductase (TE) domain of swnK is involved in reduction of the thioester bond to release the intermediate aldehydes. The oxidoreductase swnN could contribute to the reduction of 1-oxoindolizidine to (1S)-1-hydroxyindolizin and (1R)-1-hydroxyindolizine, contributing to the major route of SW production. The dioxygenase swnH2 would be responsible for the oxidization of (1R)-1-hydroxyindolizine into (1R,2S)-1,2-dihydroxyindolizine and of (1S)-1-hydroxyindolizin to yield both (1R,2S)-1,2-dihydroxyindolizine and (1S,2S)-1,2-dihydroxyindolizine. The dioxygenase swnH1 then performs the conversion of the 1,2-dihydroxyindolizine epimers to SW. The polypeptide is Dioxygenase swnH1 (Metarhizium robertsii (strain ARSEF 23 / ATCC MYA-3075) (Metarhizium anisopliae (strain ARSEF 23))).